The sequence spans 421 residues: Gamma-glutamyl phosphate reductase (421 aa).

The protein belongs to the gamma-glutamyl phosphate reductase family.

The protein localises to the cytoplasm. The enzyme catalyses L-glutamate 5-semialdehyde + phosphate + NADP(+) = L-glutamyl 5-phosphate + NADPH + H(+). It participates in amino-acid biosynthesis; L-proline biosynthesis; L-glutamate 5-semialdehyde from L-glutamate: step 2/2. Catalyzes the NADPH-dependent reduction of L-glutamate 5-phosphate into L-glutamate 5-semialdehyde and phosphate. The product spontaneously undergoes cyclization to form 1-pyrroline-5-carboxylate. This chain is Gamma-glutamyl phosphate reductase, found in Ruegeria sp. (strain TM1040) (Silicibacter sp.).